We begin with the raw amino-acid sequence, 213 residues long: Orotate phosphoribosyltransferase (213 aa).

Lys-26 is a 5-phospho-alpha-D-ribose 1-diphosphate binding site. 34 to 35 is a binding site for orotate; the sequence is FF. Residues 72–73, Arg-99, Lys-100, Lys-103, His-105, and 124–132 each bind 5-phospho-alpha-D-ribose 1-diphosphate; these read YK and DDVITAGTA. Orotate is bound by residues Thr-128 and Arg-156.

The protein belongs to the purine/pyrimidine phosphoribosyltransferase family. PyrE subfamily. Homodimer. The cofactor is Mg(2+).

The enzyme catalyses orotidine 5'-phosphate + diphosphate = orotate + 5-phospho-alpha-D-ribose 1-diphosphate. It participates in pyrimidine metabolism; UMP biosynthesis via de novo pathway; UMP from orotate: step 1/2. Functionally, catalyzes the transfer of a ribosyl phosphate group from 5-phosphoribose 1-diphosphate to orotate, leading to the formation of orotidine monophosphate (OMP). The protein is Orotate phosphoribosyltransferase of Shigella flexneri.